Consider the following 329-residue polypeptide: 4-hydroxythreonine-4-phosphate dehydrogenase (329 aa).

Residues histidine 136 and threonine 137 each coordinate substrate. A divalent metal cation is bound by residues histidine 166, histidine 211, and histidine 266. Substrate contacts are provided by lysine 274, asparagine 283, and arginine 292.

Belongs to the PdxA family. As to quaternary structure, homodimer. Zn(2+) serves as cofactor. Requires Mg(2+) as cofactor. The cofactor is Co(2+).

Its subcellular location is the cytoplasm. It carries out the reaction 4-(phosphooxy)-L-threonine + NAD(+) = 3-amino-2-oxopropyl phosphate + CO2 + NADH. The protein operates within cofactor biosynthesis; pyridoxine 5'-phosphate biosynthesis; pyridoxine 5'-phosphate from D-erythrose 4-phosphate: step 4/5. Functionally, catalyzes the NAD(P)-dependent oxidation of 4-(phosphooxy)-L-threonine (HTP) into 2-amino-3-oxo-4-(phosphooxy)butyric acid which spontaneously decarboxylates to form 3-amino-2-oxopropyl phosphate (AHAP). The sequence is that of 4-hydroxythreonine-4-phosphate dehydrogenase from Escherichia coli (strain K12 / MC4100 / BW2952).